A 442-amino-acid polypeptide reads, in one-letter code: 3-isopropylmalate dehydratase large subunit (442 aa).

[4Fe-4S] cluster contacts are provided by Cys347, Cys407, and Cys410.

Belongs to the aconitase/IPM isomerase family. LeuC type 1 subfamily. As to quaternary structure, heterodimer of LeuC and LeuD. Requires [4Fe-4S] cluster as cofactor.

It catalyses the reaction (2R,3S)-3-isopropylmalate = (2S)-2-isopropylmalate. It functions in the pathway amino-acid biosynthesis; L-leucine biosynthesis; L-leucine from 3-methyl-2-oxobutanoate: step 2/4. In terms of biological role, catalyzes the isomerization between 2-isopropylmalate and 3-isopropylmalate, via the formation of 2-isopropylmaleate. The polypeptide is 3-isopropylmalate dehydratase large subunit (Buchnera aphidicola subsp. Uroleucon helianthicola).